An 83-amino-acid polypeptide reads, in one-letter code: Putative beta-neurotoxin RjAa10f (83 aa).

The signal sequence occupies residues 1 to 18 (MKILIFIIASFMLIGVWC). The region spanning 19–82 (KEGYPMGRDG…VWDPNNNKCV (64 aa)) is the LCN-type CS-alpha/beta domain. 4 disulfides stabilise this stretch: cysteine 29–cysteine 81, cysteine 33–cysteine 55, cysteine 40–cysteine 62, and cysteine 44–cysteine 64.

This sequence belongs to the long (4 C-C) scorpion toxin superfamily. Sodium channel inhibitor family. Beta subfamily. As to expression, expressed by the venom gland.

It is found in the secreted. In terms of biological role, beta toxins bind voltage-independently at site-4 of sodium channels (Nav) and shift the voltage of activation toward more negative potentials thereby affecting sodium channel activation and promoting spontaneous and repetitive firing. The sequence is that of Putative beta-neurotoxin RjAa10f from Rhopalurus junceus (Caribbean blue scorpion).